Reading from the N-terminus, the 252-residue chain is Uridylate kinase (252 aa).

27-30 (KLGG) contributes to the ATP binding site. Glycine 68 serves as a coordination point for UMP. Residues glycine 69 and arginine 73 each coordinate ATP. UMP contacts are provided by residues aspartate 88 and 149-156 (MGLPYFST). Tyrosine 182 and aspartate 185 together coordinate ATP.

It belongs to the UMP kinase family. As to quaternary structure, homohexamer.

It localises to the cytoplasm. The enzyme catalyses UMP + ATP = UDP + ADP. The protein operates within pyrimidine metabolism; CTP biosynthesis via de novo pathway; UDP from UMP (UMPK route): step 1/1. Its activity is regulated as follows. Inhibited by UTP. Catalyzes the reversible phosphorylation of UMP to UDP. This chain is Uridylate kinase, found in Mycobacterium sp. (strain JLS).